The primary structure comprises 140 residues: MSTMHVEVVSAEAQIYSGEAEFLVAPGEMGELGVYPRHVPLLTRIKPGPLRIRVPGQAEEVIVAVSGGLMEVQPDAITVLADVAVRGDEIDEARAEAAKKAAEAALEKATDDRETAAARQALKTAIAELKALDYLRRRVH.

Belongs to the ATPase epsilon chain family. As to quaternary structure, F-type ATPases have 2 components, CF(1) - the catalytic core - and CF(0) - the membrane proton channel. CF(1) has five subunits: alpha(3), beta(3), gamma(1), delta(1), epsilon(1). CF(0) has three main subunits: a, b and c.

The protein localises to the cell inner membrane. Functionally, produces ATP from ADP in the presence of a proton gradient across the membrane. This chain is ATP synthase epsilon chain, found in Laribacter hongkongensis (strain HLHK9).